The following is a 505-amino-acid chain: Argininosuccinate lyase (505 aa).

This sequence belongs to the lyase 1 family. Argininosuccinate lyase subfamily.

The protein localises to the cytoplasm. The enzyme catalyses 2-(N(omega)-L-arginino)succinate = fumarate + L-arginine. The protein operates within amino-acid biosynthesis; L-arginine biosynthesis; L-arginine from L-ornithine and carbamoyl phosphate: step 3/3. The chain is Argininosuccinate lyase from Rhodococcoides fascians (Rhodococcus fascians).